Here is a 339-residue protein sequence, read N- to C-terminus: Small ribosomal subunit protein mS27 (339 aa).

A mitochondrion-targeting transit peptide spans 1 to 37 (MGTITVVINEGPILLIRALHRATTNKKMFRSTVWRRF).

The protein belongs to the mitochondrion-specific ribosomal protein mS27 family. In terms of assembly, component of the mitochondrial small ribosomal subunit (mt-SSU). Mature yeast 74S mitochondrial ribosomes consist of a small (37S) and a large (54S) subunit. The 37S small subunit contains a 15S ribosomal RNA (15S mt-rRNA) and 34 different proteins. The 54S large subunit contains a 21S rRNA (21S mt-rRNA) and 46 different proteins.

It is found in the mitochondrion. In terms of biological role, component of the mitochondrial ribosome (mitoribosome), a dedicated translation machinery responsible for the synthesis of mitochondrial genome-encoded proteins, including at least some of the essential transmembrane subunits of the mitochondrial respiratory chain. The mitoribosomes are attached to the mitochondrial inner membrane and translation products are cotranslationally integrated into the membrane. The protein is Small ribosomal subunit protein mS27 (MRP13) of Saccharomyces cerevisiae (strain ATCC 204508 / S288c) (Baker's yeast).